The sequence spans 626 residues: Transketolase-like protein 2 (626 aa).

Thiamine diphosphate-binding positions include Ser41, His78, and 124–126 (GSL). Asp156 serves as a coordination point for Mg(2+). Thiamine diphosphate contacts are provided by Gly157 and Asn186. Mg(2+) is bound by residues Asn186 and Leu188. The thiamine diphosphate site is built by Lys248 and His262. 2 residues coordinate substrate: His262 and Ser349. The thiamine diphosphate site is built by Glu370 and Phe396. Glu370 serves as the catalytic Proton donor. Positions 420 and 428 each coordinate substrate. A thiamine diphosphate-binding site is contributed by Gln432.

It belongs to the transketolase family. Homodimer. Requires Mg(2+) as cofactor. Ca(2+) is required as a cofactor. It depends on Mn(2+) as a cofactor. The cofactor is Co(2+). Thiamine diphosphate serves as cofactor. Overexpressed in hepatoma cancer cells.

The catalysed reaction is D-sedoheptulose 7-phosphate + D-glyceraldehyde 3-phosphate = aldehydo-D-ribose 5-phosphate + D-xylulose 5-phosphate. In terms of biological role, plays an essential role in total transketolase activity and cell proliferation in cancer cells; after transfection with anti-TKTL1 siRNA, total transketolase activity dramatically decreases and proliferation was significantly inhibited in cancer cells. Plays a pivotal role in carcinogenesis. The sequence is that of Transketolase-like protein 2 (TKTL2) from Homo sapiens (Human).